The chain runs to 262 residues: 4-hydroxy-2-oxo-heptane-1,7-dioate aldolase (262 aa).

The Proton acceptor role is filled by H45. Q147 contacts substrate. E149 lines the a divalent metal cation pocket. Residues A174 and D175 each coordinate substrate. D175 provides a ligand contact to a divalent metal cation.

It belongs to the HpcH/HpaI aldolase family. Homohexamer; trimer of dimers. A divalent metal cation serves as cofactor.

It carries out the reaction 4-hydroxy-2-oxoheptanedioate = succinate semialdehyde + pyruvate. It participates in aromatic compound metabolism; 4-hydroxyphenylacetate degradation; pyruvate and succinate semialdehyde from 4-hydroxyphenylacetate: step 7/7. Catalyzes the reversible retro-aldol cleavage of 4-hydroxy-2-ketoheptane-1,7-dioate (HKHD) to pyruvate and succinic semialdehyde. The sequence is that of 4-hydroxy-2-oxo-heptane-1,7-dioate aldolase from Shigella boydii serotype 4 (strain Sb227).